Reading from the N-terminus, the 258-residue chain is Phosphate import ATP-binding protein PstB (258 aa).

The ABC transporter domain maps to 12–253 (IEVKNLNFYY…PARKETEDYI (242 aa)). Position 44 to 51 (44 to 51 (GPSGCGKS)) interacts with ATP.

This sequence belongs to the ABC transporter superfamily. Phosphate importer (TC 3.A.1.7) family. In terms of assembly, the complex is composed of two ATP-binding proteins (PstB), two transmembrane proteins (PstC and PstA) and a solute-binding protein (PstS).

It localises to the cell inner membrane. It catalyses the reaction phosphate(out) + ATP + H2O = ADP + 2 phosphate(in) + H(+). In terms of biological role, part of the ABC transporter complex PstSACB involved in phosphate import. Responsible for energy coupling to the transport system. The protein is Phosphate import ATP-binding protein PstB of Bordetella avium (strain 197N).